A 560-amino-acid chain; its full sequence is MPKNMAALQQSLYTGPSTPSHTQFSRSTEFPENLNFDVLNDSYETFSSVSLTTAEQDNQIDKILQESAAMNRDVNSELAQFTASEYVTGFRADTMEPEVIVETIGDSMKRKASELDSDSDSGESSKGKKRVIKPKMRQRYKKATIQNKTSLTEECNYNTEICTVAPTDQIAEYFKHDFSVYLEKQKSDCQMSANRFSDYISETGYYVFVVKKSEHKPFEVVFAKFVNNVTNEYTNNYYMVDNRVFVVSLNNVKFMVSYKLVREQGIDIPPHVNLCDDAQAERNPYDCYFEPVKNVFQTTLINHFHLDMYYSQTTFVTLMQSMGESKSGMLLNKLYQMFQDRSLFTLPIMLSRKEPTIENTPLSRNYTSSYVAQIIKYSKNVRFPENNPDNGVISRLEEIVTQKSSLTYKYSSVANLLFSRYGHQRDNNADSLKKVKKEDGNRLLVEQYMSQNENDETSHNFIVLQFGGVNDERLTIAKKGIEFFWIAAEIKDINVDDLVKKYTRNVHHVFRIINVNRRESTTWHNNLLKLLQLLLQNLIRIDDVQQYSNKGDSKFIYKRL.

The tract at residues 106 to 133 (DSMKRKASELDSDSDSGESSKGKKRVIK) is disordered.

This sequence belongs to the nucleopolyhedrovirus IE-1 protein family.

In terms of biological role, regulatory transcriptional protein, which trans-activates gene expression from early baculovirus promoters. Can also trans-activate its own promoter, suggesting that it is autoregulated during normal infection of insect cells. This chain is Trans-activating transcriptional regulatory protein (IE1), found in Choristoneura fumiferana nuclear polyhedrosis virus (CfMNPV).